The chain runs to 122 residues: Acidic phospholipase A2 (122 aa).

Cystine bridges form between cysteine 26/cysteine 115, cysteine 28/cysteine 44, cysteine 43/cysteine 95, cysteine 49/cysteine 122, cysteine 50/cysteine 88, cysteine 57/cysteine 81, and cysteine 75/cysteine 86. Residues tyrosine 27, glycine 29, and glycine 31 each contribute to the Ca(2+) site. Histidine 47 is a catalytic residue. Position 48 (aspartate 48) interacts with Ca(2+). The active site involves aspartate 89.

As to quaternary structure, may form tetramers. The cofactor is Ca(2+). As to expression, expressed by the venom gland.

The protein resides in the secreted. The enzyme catalyses a 1,2-diacyl-sn-glycero-3-phosphocholine + H2O = a 1-acyl-sn-glycero-3-phosphocholine + a fatty acid + H(+). In terms of biological role, PLA2 catalyzes the calcium-dependent hydrolysis of the 2-acyl groups in 3-sn-phosphoglycerides. In vivo, is non-lethal to mice when intravenously injected up to a concentration of 30 ug, however does show significant edematogenic activity at the injection site. The protein is Acidic phospholipase A2 of Lachesis acrochorda (Chocoan bushmaster).